We begin with the raw amino-acid sequence, 167 residues long: MKKLDVQIAIEADGWPDEAELEALSTRILDHAADFIAAEGQPFAPMPAEVSLVFTGDTEIQAINSEWRGQDKPTNVLSFPAYPIEPGDKPGPMLGDIVIARQTVEREAAELEKTITDHLTHLMVHGFLHLFGYDHMTEDEAEEMEGLETRILAGLGLSDPYAGQVPV.

3 residues coordinate Zn(2+): histidine 125, histidine 129, and histidine 135.

Belongs to the endoribonuclease YbeY family. Zn(2+) is required as a cofactor.

The protein localises to the cytoplasm. In terms of biological role, single strand-specific metallo-endoribonuclease involved in late-stage 70S ribosome quality control and in maturation of the 3' terminus of the 16S rRNA. This is Endoribonuclease YbeY from Allorhizobium ampelinum (strain ATCC BAA-846 / DSM 112012 / S4) (Agrobacterium vitis (strain S4)).